We begin with the raw amino-acid sequence, 72 residues long: UPF0337 protein bsl2407 (72 aa).

Residues Met1–Ala55 are disordered. Over residues Glu35–Gln47 the composition is skewed to low complexity.

The protein belongs to the UPF0337 (CsbD) family.

The protein is UPF0337 protein bsl2407 of Bradyrhizobium diazoefficiens (strain JCM 10833 / BCRC 13528 / IAM 13628 / NBRC 14792 / USDA 110).